We begin with the raw amino-acid sequence, 386 residues long: 23S rRNA (uracil(747)-C(5))-methyltransferase RlmC (386 aa).

[4Fe-4S] cluster is bound by residues Cys-7, Cys-15, Cys-18, and Cys-94. The S-adenosyl-L-methionine site is built by Gln-219, Phe-248, Glu-269, and Asn-316. The Nucleophile role is filled by Cys-343.

This sequence belongs to the class I-like SAM-binding methyltransferase superfamily. RNA M5U methyltransferase family. RlmC subfamily.

The catalysed reaction is uridine(747) in 23S rRNA + S-adenosyl-L-methionine = 5-methyluridine(747) in 23S rRNA + S-adenosyl-L-homocysteine + H(+). In terms of biological role, catalyzes the formation of 5-methyl-uridine at position 747 (m5U747) in 23S rRNA. This chain is 23S rRNA (uracil(747)-C(5))-methyltransferase RlmC, found in Shewanella oneidensis (strain ATCC 700550 / JCM 31522 / CIP 106686 / LMG 19005 / NCIMB 14063 / MR-1).